Reading from the N-terminus, the 391-residue chain is Thioredoxin-interacting protein (391 aa).

Lys-212 is covalently cross-linked (Glycyl lysine isopeptide (Lys-Gly) (interchain with G-Cter in ubiquitin)). Ser-361 is modified (phosphoserine).

The protein belongs to the arrestin family. As to quaternary structure, homodimer; disulfide-linked. Interacts with TXN/thioredoxin through its redox-active site. Interacts with transcriptional repressors ZBTB16, ZBTB32 and HDAC1. Interacts with DDIT4. Ubiquitinated; undergoes heterotypic 'Lys-48'-/'Lys-63'-branched polyubiquitination catalyzed by ITCH and UBR5 resulting in proteasomal degradation. Deubiquitinated by USP5, leading to TXNIP stabilization.

It localises to the cytoplasm. In terms of biological role, may act as an oxidative stress mediator by inhibiting thioredoxin activity or by limiting its bioavailability. Interacts with COPS5 and restores COPS5-induced suppression of CDKN1B stability, blocking the COPS5-mediated translocation of CDKN1B from the nucleus to the cytoplasm. Functions as a transcriptional repressor, possibly by acting as a bridge molecule between transcription factors and corepressor complexes, and over-expression will induce G0/G1 cell cycle arrest. Required for the maturation of natural killer cells. Acts as a suppressor of tumor cell growth. Inhibits the proteasomal degradation of DDIT4, and thereby contributes to the inhibition of the mammalian target of rapamycin complex 1 (mTORC1). This chain is Thioredoxin-interacting protein (TXNIP), found in Sus scrofa (Pig).